The chain runs to 104 residues: Large ribosomal subunit protein uL24 (104 aa).

The protein belongs to the universal ribosomal protein uL24 family. Part of the 50S ribosomal subunit.

In terms of biological role, one of two assembly initiator proteins, it binds directly to the 5'-end of the 23S rRNA, where it nucleates assembly of the 50S subunit. One of the proteins that surrounds the polypeptide exit tunnel on the outside of the subunit. This Corynebacterium kroppenstedtii (strain DSM 44385 / JCM 11950 / CIP 105744 / CCUG 35717) protein is Large ribosomal subunit protein uL24.